The following is a 293-amino-acid chain: tRNA pseudouridine synthase B (293 aa).

The active-site Nucleophile is the Asp-40.

This sequence belongs to the pseudouridine synthase TruB family. Type 1 subfamily.

It carries out the reaction uridine(55) in tRNA = pseudouridine(55) in tRNA. Functionally, responsible for synthesis of pseudouridine from uracil-55 in the psi GC loop of transfer RNAs. The polypeptide is tRNA pseudouridine synthase B (Mycolicibacterium paratuberculosis (strain ATCC BAA-968 / K-10) (Mycobacterium paratuberculosis)).